The sequence spans 183 residues: Peptidyl-prolyl cis-trans isomerase H (183 aa).

The region spanning 19 to 182 (FFDVALGGEP…QDVVIIQCGE (164 aa)) is the PPIase cyclophilin-type domain.

Belongs to the cyclophilin-type PPIase family. PPIase H subfamily.

The protein resides in the nucleus. It carries out the reaction [protein]-peptidylproline (omega=180) = [protein]-peptidylproline (omega=0). Functionally, PPIases accelerate the folding of proteins. It catalyzes the cis-trans isomerization of proline imidic peptide bonds in oligopeptides. The polypeptide is Peptidyl-prolyl cis-trans isomerase H (cyp3) (Emericella nidulans (strain FGSC A4 / ATCC 38163 / CBS 112.46 / NRRL 194 / M139) (Aspergillus nidulans)).